The chain runs to 185 residues: Large ribosomal subunit protein bL25 (185 aa).

The protein belongs to the bacterial ribosomal protein bL25 family. CTC subfamily. Part of the 50S ribosomal subunit; part of the 5S rRNA/L5/L18/L25 subcomplex. Contacts the 5S rRNA. Binds to the 5S rRNA independently of L5 and L18.

Functionally, this is one of the proteins that binds to the 5S RNA in the ribosome where it forms part of the central protuberance. The chain is Large ribosomal subunit protein bL25 from Chlamydia caviae (strain ATCC VR-813 / DSM 19441 / 03DC25 / GPIC) (Chlamydophila caviae).